Reading from the N-terminus, the 160-residue chain is Cyclic pyranopterin monophosphate synthase (160 aa).

Residues 77-79 and 114-115 contribute to the substrate site; these read MCH and ME. Residue Asp129 is part of the active site.

It belongs to the MoaC family. In terms of assembly, homohexamer; trimer of dimers.

The catalysed reaction is (8S)-3',8-cyclo-7,8-dihydroguanosine 5'-triphosphate = cyclic pyranopterin phosphate + diphosphate. It functions in the pathway cofactor biosynthesis; molybdopterin biosynthesis. In terms of biological role, catalyzes the conversion of (8S)-3',8-cyclo-7,8-dihydroguanosine 5'-triphosphate to cyclic pyranopterin monophosphate (cPMP). In Listeria monocytogenes serovar 1/2a (strain ATCC BAA-679 / EGD-e), this protein is Cyclic pyranopterin monophosphate synthase.